A 175-amino-acid polypeptide reads, in one-letter code: Adenine phosphoribosyltransferase (175 aa).

This sequence belongs to the purine/pyrimidine phosphoribosyltransferase family. In terms of assembly, homodimer.

The protein resides in the cytoplasm. The catalysed reaction is AMP + diphosphate = 5-phospho-alpha-D-ribose 1-diphosphate + adenine. The protein operates within purine metabolism; AMP biosynthesis via salvage pathway; AMP from adenine: step 1/1. Its function is as follows. Catalyzes a salvage reaction resulting in the formation of AMP, that is energically less costly than de novo synthesis. The polypeptide is Adenine phosphoribosyltransferase (Synechococcus sp. (strain CC9902)).